The chain runs to 359 residues: Cysteine/Cysteine sulfinic acid decarboxylase (359 aa).

The protein in the N-terminal section; belongs to the HFCD (homo-oligomeric flavin containing Cys decarboxylase) superfamily. In the C-terminal section; belongs to the PPC synthetase family.

It catalyses the reaction L-cysteine + H(+) = cysteamine + CO2. It carries out the reaction 3-sulfino-L-alanine + H(+) = hypotaurine + CO2. Its activity is regulated as follows. Slightly stimulated in the presence of 1 mM Mg(2+). In terms of biological role, catalyzes the decarboxylation of L-cysteine to cysteamine and of 3-sulfino-L-alanine (cysteine sulfinic acid) to hypotaurine. Also catalyzes the decarboxylation of various amino acids such as L-lysine, L-glutamate, L-asparaginate and L-proline. In vitro, shows highest activity with L-cysteine as substrate. This chain is Cysteine/Cysteine sulfinic acid decarboxylase, found in Unknown prokaryotic organism.